A 242-amino-acid chain; its full sequence is Probable transcriptional regulatory protein Dred_1658 (242 aa).

It belongs to the TACO1 family.

Its subcellular location is the cytoplasm. This is Probable transcriptional regulatory protein Dred_1658 from Desulforamulus reducens (strain ATCC BAA-1160 / DSM 100696 / MI-1) (Desulfotomaculum reducens).